Consider the following 308-residue polypeptide: Ribosomal RNA large subunit methyltransferase F (308 aa).

The protein belongs to the methyltransferase superfamily. METTL16/RlmF family.

The protein localises to the cytoplasm. It carries out the reaction adenosine(1618) in 23S rRNA + S-adenosyl-L-methionine = N(6)-methyladenosine(1618) in 23S rRNA + S-adenosyl-L-homocysteine + H(+). Functionally, specifically methylates the adenine in position 1618 of 23S rRNA. The polypeptide is Ribosomal RNA large subunit methyltransferase F (Escherichia coli O157:H7).